Reading from the N-terminus, the 290-residue chain is Appressorium protein ROW2 (290 aa).

Positions 1–19 (MFTKSVFIALVAGVLGVTA) are cleaved as a signal peptide. A disordered region spans residues 266 to 290 (AIKTPSKRSVMATHVKRSPEWEEEP).

It is found in the secreted. It localises to the nucleus. In terms of biological role, plays a role in the formation of the appressorium, a specialized infection structure with the purpose of penetrating the host surface, and is required for proper remodeling of the appressorium wall and vesicle secretion. This chain is Appressorium protein ROW2, found in Mycosarcoma maydis (Corn smut fungus).